A 70-amino-acid polypeptide reads, in one-letter code: DNA gyrase inhibitor YacG (70 aa).

4 residues coordinate Zn(2+): Cys9, Cys12, Cys28, and Cys32. A disordered region spans residues Ser44–Gln70.

This sequence belongs to the DNA gyrase inhibitor YacG family. In terms of assembly, interacts with GyrB. Zn(2+) is required as a cofactor.

In terms of biological role, inhibits all the catalytic activities of DNA gyrase by preventing its interaction with DNA. Acts by binding directly to the C-terminal domain of GyrB, which probably disrupts DNA binding by the gyrase. This is DNA gyrase inhibitor YacG from Legionella pneumophila subsp. pneumophila (strain Philadelphia 1 / ATCC 33152 / DSM 7513).